We begin with the raw amino-acid sequence, 494 residues long: Glycosyl hydrolase family 109 protein (494 aa).

The disordered stretch occupies residues 1 to 32 (MNDDARPAPEPQDIPPHSGAADEVNRQDPSRR). A signal peptide (tat-type signal) is located at residues 1 to 58 (MNDDARPAPEPQDIPPHSGAADEVNRQDPSRRSVLWTTAGVAGAGLGLGALGAGTASA). NAD(+)-binding positions include 104–105 (NR), Asp-126, 175–178 (WELH), 195–196 (EC), and Asn-224. Substrate is bound by residues Tyr-253, Arg-272, 284 to 287 (YPNH), and Tyr-366. Residue Tyr-284 coordinates NAD(+).

Belongs to the Gfo/Idh/MocA family. Glycosyl hydrolase 109 subfamily. NAD(+) serves as cofactor. Post-translationally, predicted to be exported by the Tat system. The position of the signal peptide cleavage has not been experimentally proven.

Glycosidase. This chain is Glycosyl hydrolase family 109 protein, found in Streptomyces filamentosus (Streptomyces roseosporus).